A 411-amino-acid polypeptide reads, in one-letter code: MTEQELVESGNMKMEWARNHMPVIAIIREKFEKEKPLKGLKVGMALHVEAKTAVLVETLAAGGAQVAISGCNPLSTQDDVARALDTRKNISCFARYGCCTSEYYEAIDKVLDIEPDITIDDGADLIFKLHKERTDLLPKILGGCEETTTGVHRLHAMEKEGALKMPVIAVNDAMTKYLFDNRYGTGQSAWDGINRTTNLLVAGKNVVVGGYGWCGRGVAMRAAGLGANVIVTEVDPIRALEARMDGYRVMRMADAARLGEIFVTTTGNRDILTAEHFKVMPDGAVLANSGHFNVEIDMEALTSLAKSVKTVRHNIKEYDIGDRRINVIAEGRLVNLAAGDGHPAEVMDMSFANQALCVRYIAENTLLNGVHGVPRGIDTYVAKLKLESMGISIDELTSKQECYMTGWECGT.

Substrate-binding residues include D121 and E146. NAD(+) is bound at residue 147–149; that stretch reads TTT. Substrate is bound by residues K176 and D180. NAD(+) contacts are provided by residues N181, 210 to 215, E233, N268, 289 to 291, and N335; these read GYGWCG and SGH.

This sequence belongs to the adenosylhomocysteinase family. It depends on NAD(+) as a cofactor.

Its subcellular location is the cytoplasm. It carries out the reaction S-inosyl-L-homocysteine + H2O = L-homocysteine + inosine. The protein operates within amino-acid biosynthesis; S-adenosyl-L-methionine biosynthesis. In terms of biological role, catalyzes the hydrolysis of S-inosyl-L-homocysteine (SIH) to L-homocysteine (Hcy) and inosine. Likely functions in a S-adenosyl-L-methionine (SAM) recycling pathway from S-adenosyl-L-homocysteine (SAH) produced from SAM-dependent methylation reactions. Can also catalyze the reverse reaction in vitro, i.e. the synthesis of SIH from Hcy and inosine. This Methanosarcina acetivorans (strain ATCC 35395 / DSM 2834 / JCM 12185 / C2A) protein is S-inosyl-L-homocysteine hydrolase.